We begin with the raw amino-acid sequence, 291 residues long: Phosphatidylglycerol--prolipoprotein diacylglyceryl transferase (291 aa).

7 helical membrane-spanning segments follow: residues 21–41 (VALH…MWLA), 60–80 (LLYA…VLFY), 96–116 (WDGG…MIIF), 130–150 (FIAP…FING), 198–218 (SQLY…NLFI), 225–245 (GAVS…VEFF), and 260–280 (ISMG…MMVW). Arg-143 is an a 1,2-diacyl-sn-glycero-3-phospho-(1'-sn-glycerol) binding site.

Belongs to the Lgt family.

The protein localises to the cell inner membrane. It carries out the reaction L-cysteinyl-[prolipoprotein] + a 1,2-diacyl-sn-glycero-3-phospho-(1'-sn-glycerol) = an S-1,2-diacyl-sn-glyceryl-L-cysteinyl-[prolipoprotein] + sn-glycerol 1-phosphate + H(+). It functions in the pathway protein modification; lipoprotein biosynthesis (diacylglyceryl transfer). Catalyzes the transfer of the diacylglyceryl group from phosphatidylglycerol to the sulfhydryl group of the N-terminal cysteine of a prolipoprotein, the first step in the formation of mature lipoproteins. The polypeptide is Phosphatidylglycerol--prolipoprotein diacylglyceryl transferase (Salmonella agona (strain SL483)).